The primary structure comprises 353 residues: Photosystem II protein D1 (353 aa).

At T2 the chain carries N-acetylthreonine. T2 carries the phosphothreonine modification. 3 helical membrane passes run Y29 to S46, H118 to L133, and W142 to A156. Chlorophyll a is bound at residue H118. Y126 is a binding site for pheophytin a. Positions 170 and 189 each coordinate [CaMn4O5] cluster. Residues F197–L218 traverse the membrane as a helical segment. H198 provides a ligand contact to chlorophyll a. Residues H215 and S264–F265 contribute to the a quinone site. H215 lines the Fe cation pocket. H272 provides a ligand contact to Fe cation. A helical transmembrane segment spans residues F274–L288. H332, E333, D342, and A344 together coordinate [CaMn4O5] cluster. A propeptide spanning residues A345 to G353 is cleaved from the precursor.

This sequence belongs to the reaction center PufL/M/PsbA/D family. PSII is composed of 1 copy each of membrane proteins PsbA, PsbB, PsbC, PsbD, PsbE, PsbF, PsbH, PsbI, PsbJ, PsbK, PsbL, PsbM, PsbT, PsbX, PsbY, PsbZ, Psb30/Ycf12, at least 3 peripheral proteins of the oxygen-evolving complex and a large number of cofactors. It forms dimeric complexes. The cofactor is The D1/D2 heterodimer binds P680, chlorophylls that are the primary electron donor of PSII, and subsequent electron acceptors. It shares a non-heme iron and each subunit binds pheophytin, quinone, additional chlorophylls, carotenoids and lipids. D1 provides most of the ligands for the Mn4-Ca-O5 cluster of the oxygen-evolving complex (OEC). There is also a Cl(-1) ion associated with D1 and D2, which is required for oxygen evolution. The PSII complex binds additional chlorophylls, carotenoids and specific lipids.. Tyr-161 forms a radical intermediate that is referred to as redox-active TyrZ, YZ or Y-Z. In terms of processing, C-terminally processed by CTPA; processing is essential to allow assembly of the oxygen-evolving complex and thus photosynthetic growth.

The protein resides in the plastid. Its subcellular location is the chloroplast thylakoid membrane. It carries out the reaction 2 a plastoquinone + 4 hnu + 2 H2O = 2 a plastoquinol + O2. Functionally, photosystem II (PSII) is a light-driven water:plastoquinone oxidoreductase that uses light energy to abstract electrons from H(2)O, generating O(2) and a proton gradient subsequently used for ATP formation. It consists of a core antenna complex that captures photons, and an electron transfer chain that converts photonic excitation into a charge separation. The D1/D2 (PsbA/PsbD) reaction center heterodimer binds P680, the primary electron donor of PSII as well as several subsequent electron acceptors. The polypeptide is Photosystem II protein D1 (Lepidium virginicum (Virginia pepperweed)).